The chain runs to 172 residues: Adenine phosphoribosyltransferase (172 aa).

This sequence belongs to the purine/pyrimidine phosphoribosyltransferase family. In terms of assembly, homodimer.

It is found in the cytoplasm. The enzyme catalyses AMP + diphosphate = 5-phospho-alpha-D-ribose 1-diphosphate + adenine. It participates in purine metabolism; AMP biosynthesis via salvage pathway; AMP from adenine: step 1/1. Its function is as follows. Catalyzes a salvage reaction resulting in the formation of AMP, that is energically less costly than de novo synthesis. This is Adenine phosphoribosyltransferase from Picosynechococcus sp. (strain ATCC 27264 / PCC 7002 / PR-6) (Agmenellum quadruplicatum).